The primary structure comprises 375 residues: MEERTLVILGVTGSIGTQTLDVLRKIEGIRLVGISFHTNVELAKKIVKEFQVENVVVTGDVSFECSAKVWKGPHALEDMMEALKPDITMVAVSGFSGLRAVLAALEHSRRVCLANKESLVCGGFLVKRKLKEKSVELIPVDSEHSAIFQVIEPDVQKIVLTASGGALRDWDLEKIETATPNDVLKHPVWSMGARITVDSATMVNKAFEVLEAMELFDLPFEKIDVKIHREGLVHGVVILPDGNVKMVFSPPDMRIPISYSLLYPKRAALGSFSLETMKISFDPVNPERYPAFFLLNQIKDSYALRTAFNAADEVAVDAFLKGKIKFGGIHRVIERTLERIDGYPEPENLEEVEQIHDEARKIAERVTEWLSSISS.

NADPH is bound by residues threonine 12, glycine 13, serine 14, isoleucine 15, asparagine 39, and asparagine 115. Residue lysine 116 coordinates 1-deoxy-D-xylulose 5-phosphate. Glutamate 117 provides a ligand contact to NADPH. Mn(2+) is bound at residue aspartate 141. The 1-deoxy-D-xylulose 5-phosphate site is built by serine 142, glutamate 143, serine 163, and histidine 186. Glutamate 143 is a binding site for Mn(2+). Glycine 192 serves as a coordination point for NADPH. The 1-deoxy-D-xylulose 5-phosphate site is built by serine 199, asparagine 204, lysine 205, and glutamate 208. Glutamate 208 serves as a coordination point for Mn(2+).

It belongs to the DXR family. The cofactor is Mg(2+). Requires Mn(2+) as cofactor.

The enzyme catalyses 2-C-methyl-D-erythritol 4-phosphate + NADP(+) = 1-deoxy-D-xylulose 5-phosphate + NADPH + H(+). It participates in isoprenoid biosynthesis; isopentenyl diphosphate biosynthesis via DXP pathway; isopentenyl diphosphate from 1-deoxy-D-xylulose 5-phosphate: step 1/6. Its function is as follows. Catalyzes the NADPH-dependent rearrangement and reduction of 1-deoxy-D-xylulose-5-phosphate (DXP) to 2-C-methyl-D-erythritol 4-phosphate (MEP). This is 1-deoxy-D-xylulose 5-phosphate reductoisomerase from Thermotoga neapolitana (strain ATCC 49049 / DSM 4359 / NBRC 107923 / NS-E).